Reading from the N-terminus, the 338-residue chain is RNA 3'-terminal phosphate cyclase (338 aa).

ATP is bound by residues glutamine 103 and 283 to 287; that span reads YLADQ. Histidine 308 acts as the Tele-AMP-histidine intermediate in catalysis.

This sequence belongs to the RNA 3'-terminal cyclase family. Type 1 subfamily.

It localises to the cytoplasm. The catalysed reaction is a 3'-end 3'-phospho-ribonucleotide-RNA + ATP = a 3'-end 2',3'-cyclophospho-ribonucleotide-RNA + AMP + diphosphate. Functionally, catalyzes the conversion of 3'-phosphate to a 2',3'-cyclic phosphodiester at the end of RNA. The mechanism of action of the enzyme occurs in 3 steps: (A) adenylation of the enzyme by ATP; (B) transfer of adenylate to an RNA-N3'P to produce RNA-N3'PP5'A; (C) and attack of the adjacent 2'-hydroxyl on the 3'-phosphorus in the diester linkage to produce the cyclic end product. The biological role of this enzyme is unknown but it is likely to function in some aspects of cellular RNA processing. The polypeptide is RNA 3'-terminal phosphate cyclase (Escherichia coli O127:H6 (strain E2348/69 / EPEC)).